A 140-amino-acid polypeptide reads, in one-letter code: Low calcium response locus protein T (140 aa).

This is Low calcium response locus protein T (lcrT) from Yersinia pestis.